Reading from the N-terminus, the 164-residue chain is MIPNRKIQLSLFAVIIVFETLLNQVYAMELDEATRTVTLEESGKTITLTPEQVKRGKRLFNNSCAQCHNGGITKTNPNIGLDPESLSGATPVRDNIRNLIEYIKDPTSYDGATSIAELHPSIKSAEIFPKMRNLTDEDLFAIAGHILIQPKIAAEKWGGGKIYY.

The first 27 residues, 1-27, serve as a signal peptide directing secretion; the sequence is MIPNRKIQLSLFAVIIVFETLLNQVYA. The heme c site is built by cysteine 64, cysteine 67, histidine 68, and methionine 131.

This sequence belongs to the cytochrome c family. PsbV subfamily. As to quaternary structure, PSII is composed of 1 copy each of membrane proteins PsbA, PsbB, PsbC, PsbD, PsbE, PsbF, PsbH, PsbI, PsbJ, PsbK, PsbL, PsbM, PsbT, PsbY, PsbZ, Psb30/Ycf12, at least 3 peripheral proteins of the oxygen-evolving complex and a large number of cofactors. It forms dimeric complexes. The extrinsic subunits in red algae are PsbO (OEC33), PsbQ', cytochrome c-550 and PsbU. The cofactor is heme c.

It is found in the plastid. The protein resides in the chloroplast thylakoid membrane. In terms of biological role, one of the extrinsic, lumenal subunits of photosystem II (PSII). PSII is a light-driven water plastoquinone oxidoreductase, using light energy to abstract electrons from H(2)O, generating a proton gradient subsequently used for ATP formation. The extrinsic proteins stabilize the structure of photosystem II oxygen-evolving complex (OEC), the ion environment of oxygen evolution and protect the OEC against heat-induced inactivation. This Gracilaria tenuistipitata var. liui (Red alga) protein is Photosystem II extrinsic protein V.